A 400-amino-acid polypeptide reads, in one-letter code: Nicotinate phosphoribosyltransferase (400 aa).

Phosphohistidine; by autocatalysis is present on H220.

It belongs to the NAPRTase family. In terms of processing, transiently phosphorylated on a His residue during the reaction cycle. Phosphorylation strongly increases the affinity for substrates and increases the rate of nicotinate D-ribonucleotide production. Dephosphorylation regenerates the low-affinity form of the enzyme, leading to product release.

The catalysed reaction is nicotinate + 5-phospho-alpha-D-ribose 1-diphosphate + ATP + H2O = nicotinate beta-D-ribonucleotide + ADP + phosphate + diphosphate. It participates in cofactor biosynthesis; NAD(+) biosynthesis; nicotinate D-ribonucleotide from nicotinate: step 1/1. Catalyzes the synthesis of beta-nicotinate D-ribonucleotide from nicotinate and 5-phospho-D-ribose 1-phosphate at the expense of ATP. In Salmonella newport (strain SL254), this protein is Nicotinate phosphoribosyltransferase.